We begin with the raw amino-acid sequence, 387 residues long: Adaptive-response sensory kinase SasA (387 aa).

The interval 1–97 (MGESLSPQAL…TDQLANQLPQ (97 aa)) is interacts with KaiC. Positions 158 to 382 (LVAHDLRNPL…TFHFTMPVYR (225 aa)) constitute a Histidine kinase domain. His161 is subject to Phosphohistidine; by autocatalysis.

As to quaternary structure, homooligomerizes. Part of the circadian clock (KaiA, KaiB, KaiC, CikA, RpaA, SasA), the composition of which varies during the circadian cycle. Binds to the CI domain of KaiC; KaiB(fs) and SasA compete for the binding site. Binds preferentially to doubly phosphorylated KaiC. Interacts with LdpA. In terms of processing, autophosphorylates in vitro.

The catalysed reaction is ATP + protein L-histidine = ADP + protein N-phospho-L-histidine.. In terms of biological role, member of the two-component regulatory system SasA/RpaA involved in genome-wide circadian gene expression. One of three clock output pathways. Participates in the KaiABC clock protein complex, which constitutes the main circadian regulator in cyanobacteria, via its interaction with KaiC. Required for robustness of the circadian rhythm of gene expression and involved in clock output. KaiC enhances the autophosphorylation activity of SasA, which then transfers its phosphate group to RpaA to activate it. Phosphotransfer is maximal when KaiC phosphorylation is active during the circadian cycle; this two-component system is activated by fully phosphorylated KaiC. A very robust clock is reconstituted with KaiA, KaiB, KaiC, SasA, CikA and RpaA; output is measured by transcription from an appropriate reporter. In addition to its output function, recruits fold-shifted KaiB (KaiB(fs)) to KaiC to cooperatively form the KaiB(6):KaiC(6) complex (independent of SasA kinase activity); at physiological concentrations increases their association. At higher concentrations SasA and KaiB(fs) compete to bind to KaiC. Mutations that decrease cooperativity nearly phenocopy a deletion mutation. Autophosphorylation and phosphotransfer activities are not essential for clock rhythms in continuous light, but they are essential for adaptation to light/dark cycles. This is Adaptive-response sensory kinase SasA from Synechococcus elongatus (strain ATCC 33912 / PCC 7942 / FACHB-805) (Anacystis nidulans R2).